The chain runs to 371 residues: Peptide chain release factor 2 (371 aa).

Glutamine 253 carries the post-translational modification N5-methylglutamine.

It belongs to the prokaryotic/mitochondrial release factor family. Post-translationally, methylated by PrmC. Methylation increases the termination efficiency of RF2.

The protein resides in the cytoplasm. Peptide chain release factor 2 directs the termination of translation in response to the peptide chain termination codons UGA and UAA. The polypeptide is Peptide chain release factor 2 (Mycobacterium sp. (strain KMS)).